The following is a 328-amino-acid chain: MKAPVRVAVTGAAGQIGYALLFRIASGEMLGKDQPVILQLLELPIEKAQAALKGVMMELEDCAFPLLAGMVGTDDAEVAFKDVDIALLVGSRPRGPGMERKDLLLANAEIFTAQGAALNKVAKRDVKVLVVGNPANTNAYIAMKSAPDLDPKNFTAMLRLDHNRALSQLSAKLGKPVAGIEKLAVWGNHSPTMYPDYRFATADGASVGDAINDQEWNASTFIPTVGKRGAAIIEARGLSSAASAANAAIDHIRDWVLGTNGKWVTMGVPSDGSYGIPEGVMFGFPVTTENGKYTIVKDLPIDDFSQKYIDKTLAELEEERSGVAHLLG.

11-17 contributes to the NAD(+) binding site; sequence GAAGQIG. Residues arginine 94 and arginine 100 each coordinate substrate. NAD(+)-binding positions include asparagine 107, glutamine 114, and 131 to 133; that span reads VGN. Residues asparagine 133 and arginine 164 each coordinate substrate. Catalysis depends on histidine 189, which acts as the Proton acceptor.

This sequence belongs to the LDH/MDH superfamily. MDH type 2 family.

It carries out the reaction (S)-malate + NAD(+) = oxaloacetate + NADH + H(+). In terms of biological role, catalyzes the reversible oxidation of malate to oxaloacetate. The chain is Malate dehydrogenase from Xanthomonas euvesicatoria pv. vesicatoria (strain 85-10) (Xanthomonas campestris pv. vesicatoria).